We begin with the raw amino-acid sequence, 274 residues long: Cytochrome b-c1 complex subunit Rieske, mitochondrial (274 aa).

At 79 to 103 the chain is on the mitochondrial matrix side; the sequence is SHTDVKVPDFYDYRRLEVLDSTKSS. The helical transmembrane segment at 104 to 140 threads the bilayer; sequence RESSEARKGFSYLVTAVTTVGVAYAAKNVVTQFISSM. The Mitochondrial intermembrane portion of the chain corresponds to 141 to 274; it reads SASADVLAMA…FTGDDVVVVG (134 aa). In terms of domain architecture, Rieske spans 187-272; it reads EAAVELSQLR…YEFTGDDVVV (86 aa). Residues Cys217, His219, Cys236, His239, and Ser241 each coordinate [2Fe-2S] cluster. Cys222 and Cys238 form a disulfide bridge.

Belongs to the Rieske iron-sulfur protein family. As to quaternary structure, component of the ubiquinol-cytochrome c oxidoreductase (cytochrome b-c1 complex, complex III, CIII), a multisubunit enzyme composed of 11 subunits. The complex is composed of 3 respiratory subunits cytochrome b, cytochrome c1 and Rieske protein UQCRFS1, 2 core protein subunits UQCRC1/QCR1 and UQCRC2/QCR2, and 6 low-molecular weight protein subunits UQCRH/QCR6, UQCRB/QCR7, UQCRQ/QCR8, UQCR10/QCR9, UQCR11/QCR10 and subunit 9, the cleavage product of Rieske protein UQCRFS1. The complex exists as an obligatory dimer and forms supercomplexes (SCs) in the inner mitochondrial membrane with NADH-ubiquinone oxidoreductase (complex I, CI) and cytochrome c oxidase (complex IV, CIV), resulting in different assemblies (supercomplex SCI(1)III(2)IV(1) and megacomplex MCI(2)III(2)IV(2)). Incorporation of the Rieske protein UQCRFS1 is the penultimate step in complex III assembly. Interacts with TTC19, which is involved in the clearance of UQCRFS1 fragments. In terms of assembly, component of the ubiquinol-cytochrome c oxidoreductase (cytochrome b-c1 complex, complex III, CIII). Subunit 9 corresponds to the mitochondrial targeting sequence (MTS) of Rieske protein UQCRFS1. It is retained after processing and incorporated inside complex III, where it remains bound to the complex and localizes between the 2 core subunits UQCRC1/QCR1 and UQCRC2/QCR2. [2Fe-2S] cluster serves as cofactor. Proteolytic processing is necessary for the correct insertion of UQCRFS1 in the complex III dimer. Several fragments are generated during UQCRFS1 insertion, most probably due to the endogenous matrix-processing peptidase (MPP) activity of the 2 core protein subunits UQCRC1/QCR1 and UQCRC2/QCR2, which are homologous to the 2 mitochondrial-processing peptidase (MPP) subunits beta-MPP and alpha-MPP respectively. The action of the protease is also necessary for the clearance of the UQCRFS1 fragments.

It localises to the mitochondrion inner membrane. It carries out the reaction a quinol + 2 Fe(III)-[cytochrome c](out) = a quinone + 2 Fe(II)-[cytochrome c](out) + 2 H(+)(out). Component of the ubiquinol-cytochrome c oxidoreductase, a multisubunit transmembrane complex that is part of the mitochondrial electron transport chain which drives oxidative phosphorylation. The respiratory chain contains 3 multisubunit complexes succinate dehydrogenase (complex II, CII), ubiquinol-cytochrome c oxidoreductase (cytochrome b-c1 complex, complex III, CIII) and cytochrome c oxidase (complex IV, CIV), that cooperate to transfer electrons derived from NADH and succinate to molecular oxygen, creating an electrochemical gradient over the inner membrane that drives transmembrane transport and the ATP synthase. The cytochrome b-c1 complex catalyzes electron transfer from ubiquinol to cytochrome c, linking this redox reaction to translocation of protons across the mitochondrial inner membrane, with protons being carried across the membrane as hydrogens on the quinol. In the process called Q cycle, 2 protons are consumed from the matrix, 4 protons are released into the intermembrane space and 2 electrons are passed to cytochrome c. The Rieske protein is a catalytic core subunit containing a [2Fe-2S] iron-sulfur cluster. It cycles between 2 conformational states during catalysis to transfer electrons from the quinol bound in the Q(0) site in cytochrome b to cytochrome c1. Incorporation of UQCRFS1 is the penultimate step in complex III assembly. Its function is as follows. Component of the ubiquinol-cytochrome c oxidoreductase (cytochrome b-c1 complex, complex III, CIII). UQCRFS1 undergoes proteolytic processing once it is incorporated in the complex III dimer. One of the fragments, called subunit 9, corresponds to its mitochondrial targeting sequence (MTS). The proteolytic processing is necessary for the correct insertion of UQCRFS1 in the complex III dimer, but the persistence of UQCRFS1-derived fragments may prevent newly imported UQCRFS1 to be processed and assembled into complex III and is detrimental for the complex III structure and function. The protein is Cytochrome b-c1 complex subunit Rieske, mitochondrial (UQCRFS1) of Chlorocebus aethiops (Green monkey).